The chain runs to 103 residues: N(4)-acetylcytidine amidohydrolase (103 aa).

Residues 6–100 (ITFFQRFQED…AEDRFYVIEF (95 aa)) enclose the ASCH domain. The Proton acceptor role is filled by lysine 21. The Nucleophile role is filled by threonine 24. The active-site Proton donor is glutamate 74.

Belongs to the N(4)-acetylcytidine amidohydrolase family.

It carries out the reaction N(4)-acetylcytidine + H2O = cytidine + acetate + H(+). The enzyme catalyses N(4)-acetyl-2'-deoxycytidine + H2O = 2'-deoxycytidine + acetate + H(+). It catalyses the reaction N(4)-acetylcytosine + H2O = cytosine + acetate + H(+). Catalyzes the hydrolysis of N(4)-acetylcytidine (ac4C). The chain is N(4)-acetylcytidine amidohydrolase from Klebsiella pneumoniae (strain 342).